The following is a 230-amino-acid chain: Type 4 apparatus protein DotY (230 aa).

The disordered stretch occupies residues 202 to 230 (EPKALETKREEIRQEIESGAEAPTTQSIR). A compositionally biased stretch (basic and acidic residues) spans 204-217 (KALETKREEIRQEI).

The T4BSS is a complex nanomachine composed of several subcomplexes. This subunit is part of the Type IV Coupling Complex (T4CC), a subcomplex composed of the DotLMNYZ core and the IcmSW-LvgA adapter subunits, linked by the C-terminal tail of DotL. Six DotLMNYZ hetero-pentameric units may assemble into a hexameric nanomachine, forming an inner membrane channel for effectors to pass through. Interacts exclusively with DotZ. DotY and DotZ are co-dependent for the assembly into the T4CC.

It localises to the cytoplasm. Component of the Dot/Icm type IVB secretion system (T4BSS), which is used to inject bacterial effector proteins into eukaryotic host cells. Part of a subcomplex which recruits effector proteins and delivers them to the core transmembrane subcomplex. DotY and DotZ play a role in effector translocation, but are not essential and do not influence the stability of the subcomplex main components. The DotY/DotZ main function is to optimize secretion by modulating the delivery trajectory of the IcmSW module and the localization of the machinery to the poles. The protein is Type 4 apparatus protein DotY of Legionella pneumophila subsp. pneumophila (strain Philadelphia 1 / ATCC 33152 / DSM 7513).